Reading from the N-terminus, the 173-residue chain is Alpha-crystallin A chain (173 aa).

At methionine 1 the chain carries N-acetylmethionine. The required for complex formation with BFSP1 and BFSP2 stretch occupies residues 1 to 63; sequence MDIAIQHPWF…RTVLDSGISE (63 aa). The residue at position 6 (glutamine 6) is a Deamidated glutamine; partial. Serine 45 is subject to Phosphoserine. The residue at position 50 (glutamine 50) is a Deamidated glutamine; partial. One can recognise a sHSP domain in the interval 52 to 162; the sequence is LFRTVLDSGI…GHSERAIPVS (111 aa). Position 70 is an N6-acetyllysine (lysine 70). Glutamine 90 bears the Deamidated glutamine; partial mark. N6-acetyllysine is present on lysine 99. Histidine 100 serves as a coordination point for Zn(2+). Residue asparagine 101 is modified to Deamidated asparagine; partial. 2 residues coordinate Zn(2+): glutamate 102 and histidine 107. Serine 122 carries the phosphoserine modification. Asparagine 123 bears the Deamidated asparagine; partial mark. The disordered stretch occupies residues 144-173; it reads PKIPSGMDAGHSERAIPVSREEKPGSAPSS. The segment covering 153-167 has biased composition (basic and acidic residues); the sequence is GHSERAIPVSREEKP. Histidine 154 is a binding site for Zn(2+). Serine 162 is a glycosylation site (O-linked (GlcNAc) serine).

It belongs to the small heat shock protein (HSP20) family. In terms of assembly, heteromer composed of three CRYAA and one CRYAB subunits. Inter-subunit bridging via zinc ions enhances stability, which is crucial as there is no protein turn over in the lens. Can also form homodimers and homotetramers (dimers of dimers) which serve as the building blocks of homooligomers. Within homooligomers, the zinc-binding motif is created from residues of 3 different molecules. His-100 and Glu-102 from one molecule are ligands of the zinc ion, and His-107 and His-154 residues from additional molecules complete the site with tetrahedral coordination geometry. Part of a complex required for lens intermediate filament formation composed of BFSP1, BFSP2 and CRYAA. Post-translationally, acetylation at Lys-70 may increase chaperone activity. Undergoes age-dependent proteolytical cleavage at the C-terminus.

Its subcellular location is the cytoplasm. It localises to the nucleus. Contributes to the transparency and refractive index of the lens. Acts as a chaperone, preventing aggregation of various proteins under a wide range of stress conditions. Required for the correct formation of lens intermediate filaments as part of a complex composed of BFSP1, BFSP2 and CRYAA. The sequence is that of Alpha-crystallin A chain (CRYAA) from Equus caballus (Horse).